Consider the following 997-residue polypeptide: Sarcoplasmic/endoplasmic reticulum calcium ATPase 2 (997 aa).

The Cytoplasmic portion of the chain corresponds to 1-48 (MENAHTKTVEEVLGYFGVNESTGLSLEQVKKLKERWGSNELPAEEGKT). Ser38 bears the Phosphoserine mark. Residues 49–69 (LLELVIEQFEDLLVRILLLAA) traverse the membrane as a helical segment. Topologically, residues 70–89 (CISFVLAWFEEGEETITAFV) are lumenal. Residues 90–110 (EPFVILLILVANAIVGVWQER) traverse the membrane as a helical segment. At 111-253 (NAENAIEALK…QERTPLQQKL (143 aa)) the chain is on the cytoplasmic side. Residues 254-273 (DEFGEQLSKVISLICIAVWI) traverse the membrane as a helical segment. At 274–295 (INIGHFNDPVHGGSWIRGAIYY) the chain is on the lumenal side. Residues Tyr294 and Tyr295 each carry the 3'-nitrotyrosine modification. The chain crosses the membrane as a helical span at residues 296–313 (FKIAVALAVAAIPEGLPA). Val304, Ala305, Ile307, and Glu309 together coordinate Ca(2+). The Cytoplasmic portion of the chain corresponds to 314–756 (VITTCLALGT…EEGRAIYNNM (443 aa)). Asp351 functions as the 4-aspartylphosphate intermediate in the catalytic mechanism. Positions 351 and 353 each coordinate Mg(2+). Thr353 contributes to the ATP binding site. At Thr441 the chain carries Phosphothreonine. ATP-binding residues include Glu442, Arg489, and Lys514. Position 531 is a phosphoserine (Ser531). Arg559 contributes to the ATP binding site. Residues 575 to 594 (MNLEDSANFIKYETNLTFVG) form an interaction with HAX1 region. The residue at position 580 (Ser580) is a Phosphoserine. The ATP site is built by Thr624, Gly625, and Asp626. Phosphoserine occurs at positions 661 and 663. Arg677 and Lys683 together coordinate ATP. Asp702 lines the Mg(2+) pocket. ATP is bound at residue Asn705. The chain crosses the membrane as a helical span at residues 757-776 (KQFIRYLISSNVGEVVCIFL). Ca(2+) contacts are provided by Asn767 and Glu770. At 777-786 (TAALGFPEAL) the chain is on the lumenal side. The helical transmembrane segment at 787 to 807 (IPVQLLWVNLVTDGLPATALG) threads the bilayer. Positions 787–807 (IPVQLLWVNLVTDGLPATALG) are interaction with PLN. The interaction with TMEM64 and PDIA3 stretch occupies residues 788–997 (PVQLLWVNLV…RNYLEPAILE (210 aa)). Ca(2+) is bound by residues Asn795, Thr798, and Asp799. The Cytoplasmic portion of the chain corresponds to 808-827 (FNPPDLDIMNKPPRNPKEPL). A helical membrane pass occupies residues 828–850 (ISGWLFFRYLAIGCYVGAATVGA). Topologically, residues 851–896 (AAWWFIAADGGPRVSFYQLSHFLQCKDDNPDFEGVDCAIFESPYPM) are lumenal. A disulfide bridge links Cys875 with Cys887. Residues 897–916 (TMALSVLVTIEMCNALNSLS) traverse the membrane as a helical segment. Position 907 (Glu907) interacts with Ca(2+). At 917 to 929 (ENQSLLRMPPWEN) the chain is on the cytoplasmic side. The helical transmembrane segment at 930 to 948 (IWLVGSICLSMSLHFLILY) threads the bilayer. Residues 931–942 (WLVGSICLSMSL) are interaction with PLN. Over 949–963 (VEPLPLIFQITPLNL) the chain is Lumenal. The chain crosses the membrane as a helical span at residues 964–984 (TQWLMVLKISLPVILMDETLK). The Cytoplasmic portion of the chain corresponds to 985 to 997 (FVARNYLEPAILE).

This sequence belongs to the cation transport ATPase (P-type) (TC 3.A.3) family. Type IIA subfamily. In terms of assembly, interacts with sarcolipin (SLN); the interaction inhibits ATP2A2 Ca(2+) affinity. Interacts with phospholamban (PLN); the interaction inhibits ATP2A2 Ca(2+) affinity. Interacts with myoregulin (MRLN). Interacts with ARLN and ERLN; the interactions inhibit ATP2A2 Ca(2+) affinity. Interacts with STRIT1/DWORF; the interaction results in activation of ATP2A2. Interacts with the monomeric forms of SLN, PLN, ARLN, ERLN and STRI1/DWORF. Interacts with HAX1. Interacts with S100A8 and S100A9. Interacts with SLC35G1 and STIM1. Interacts with TMEM203. Interacts with TMEM64 and PDIA3. Interacts with TMX1. Interacts with TMX2. Interacts with VMP1; VMP1 competes with PLN and SLN to prevent them from forming an inhibitory complex with ATP2A2. Interacts with ULK1. Interacts with S100A1 in a Ca(2+)-dependent manner. Interacts with TUNAR. Interacts with FLVCR2; this interaction occurs in the absence of heme and promotes ATP2A2 proteasomal degradation; this complex is dissociated upon heme binding. Interacts with FNIP1. Interacts with TRAM2 (via C-terminus). Requires Mg(2+) as cofactor. Nitrated under oxidative stress. Nitration on the two tyrosine residues inhibits catalytic activity. Post-translationally, serotonylated on Gln residues by TGM2 in response to hypoxia, leading to its inactivation. In terms of tissue distribution, isoform 1 is expressed in the heart.

Its subcellular location is the endoplasmic reticulum membrane. It is found in the sarcoplasmic reticulum membrane. It carries out the reaction Ca(2+)(in) + ATP + H2O = Ca(2+)(out) + ADP + phosphate + H(+). Its activity is regulated as follows. Has different conformational states with differential Ca2+ affinity. The E1 conformational state (active form) shows high Ca(2+) affinity, while the E2 state exhibits low Ca(2+) affinity. Binding of ATP allosterically increases its affinity for subsequent binding of Ca2+. Reversibly inhibited by phospholamban (PLN) at low calcium concentrations. PLN inhibits ATP2A2 Ca(2+) affinity by disrupting its allosteric activation by ATP. Inhibited by sarcolipin (SLN) and myoregulin (MRLN). The inhibition is blocked by VMP1. Enhanced by STRIT1/DWORF; STRIT1 increases activity by displacing sarcolipin (SLN), phospholamban (PLN) and myoregulin (MRLN). Stabilizes SERCA2 in its E2 state. Its function is as follows. This magnesium-dependent enzyme catalyzes the hydrolysis of ATP coupled with the translocation of calcium from the cytosol to the sarcoplasmic reticulum lumen. Involved in autophagy in response to starvation. Upon interaction with VMP1 and activation, controls ER-isolation membrane contacts for autophagosome formation. Also modulates ER contacts with lipid droplets, mitochondria and endosomes. In coordination with FLVCR2 mediates heme-stimulated switching from mitochondrial ATP synthesis to thermogenesis. Functionally, involved in the regulation of the contraction/relaxation cycle. Acts as a regulator of TNFSF11-mediated Ca(2+) signaling pathways via its interaction with TMEM64 which is critical for the TNFSF11-induced CREB1 activation and mitochondrial ROS generation necessary for proper osteoclast generation. Association between TMEM64 and SERCA2 in the ER leads to cytosolic Ca(2+) spiking for activation of NFATC1 and production of mitochondrial ROS, thereby triggering Ca(2+) signaling cascades that promote osteoclast differentiation and activation. This Felis catus (Cat) protein is Sarcoplasmic/endoplasmic reticulum calcium ATPase 2 (ATP2A2).